A 353-amino-acid polypeptide reads, in one-letter code: Methionine import ATP-binding protein MetN (353 aa).

The ABC transporter domain maps to 8–249 (LDQIDVTFHQ…PKQPLTQDFI (242 aa)). 42 to 49 (GYSGAGKS) provides a ligand contact to ATP.

The protein belongs to the ABC transporter superfamily. Methionine importer (TC 3.A.1.24) family. In terms of assembly, the complex is composed of two ATP-binding proteins (MetN), two transmembrane proteins (MetI) and a solute-binding protein (MetQ).

It is found in the cell membrane. It carries out the reaction L-methionine(out) + ATP + H2O = L-methionine(in) + ADP + phosphate + H(+). It catalyses the reaction D-methionine(out) + ATP + H2O = D-methionine(in) + ADP + phosphate + H(+). In terms of biological role, part of the ABC transporter complex MetNIQ involved in methionine import. Responsible for energy coupling to the transport system. The polypeptide is Methionine import ATP-binding protein MetN (Streptococcus pneumoniae (strain ATCC BAA-255 / R6)).